A 109-amino-acid chain; its full sequence is MKTLPKERRYETLSYLPPLSDQQIARQIEYMVREGYIPAVEFNEDSDATTCYWTMWKLPLFHATSTQEVLGEVRECRTEYPNCYIRVVGFDNIKQCQSVSFIVHKPNRY.

Belongs to the RuBisCO small chain family. As to quaternary structure, heterohexadecamer of 8 large and 8 small subunits.

The protein localises to the carboxysome. RuBisCO catalyzes two reactions: the carboxylation of D-ribulose 1,5-bisphosphate, the primary event in carbon dioxide fixation, as well as the oxidative fragmentation of the pentose substrate in the photorespiration process. Both reactions occur simultaneously and in competition at the same active site. Although the small subunit is not catalytic it is essential for maximal activity. The polypeptide is Ribulose bisphosphate carboxylase small subunit (Prochlorothrix hollandica).